We begin with the raw amino-acid sequence, 269 residues long: Transcription factor MYB7 (269 aa).

HTH myb-type domains lie at 9–61 (KEHM…INYL) and 62–116 (RPDL…KRKL). DNA-binding regions (H-T-H motif) lie at residues 37 to 61 (WRSL…INYL) and 89 to 112 (WSLI…NTHI).

As to quaternary structure, interacts with SAD2. In terms of tissue distribution, expressed in anthers. Expressed in pollen grains and mature seeds. Expressed in roots and vasculature of leaves.

It localises to the nucleus. Its function is as follows. Transcription factor involved in the negative regulation of flavonol biosynthesis. Represses the early phenylpropanoid genes, phenylalanine ammonia-lyase (PAL), cinnamate 4-hydroxylase (C4H) and 4-coumarate-CoA ligase (4CL), as well as the flavonoid-specific genes, flavonoid 3'-hydroxylase (F3'H) and dihydroflavonol 4-reductase (DFR). Plays a role in seed germination inhibition. Negatively regulates the expression of the abscisic acid (ABA) signaling transcription factor ABI5 in seeds. This is Transcription factor MYB7 from Arabidopsis thaliana (Mouse-ear cress).